Reading from the N-terminus, the 176-residue chain is ATP-dependent protease subunit HslV (176 aa).

Threonine 2 is an active-site residue. 3 residues coordinate Na(+): glycine 157, cysteine 160, and threonine 163.

Belongs to the peptidase T1B family. HslV subfamily. In terms of assembly, a double ring-shaped homohexamer of HslV is capped on each side by a ring-shaped HslU homohexamer. The assembly of the HslU/HslV complex is dependent on binding of ATP.

It localises to the cytoplasm. The catalysed reaction is ATP-dependent cleavage of peptide bonds with broad specificity.. Its activity is regulated as follows. Allosterically activated by HslU binding. Functionally, protease subunit of a proteasome-like degradation complex believed to be a general protein degrading machinery. The polypeptide is ATP-dependent protease subunit HslV (Pseudomonas syringae pv. tomato (strain ATCC BAA-871 / DC3000)).